Reading from the N-terminus, the 362-residue chain is UDP-N-acetylglucosamine--N-acetylmuramyl-(pentapeptide) pyrophosphoryl-undecaprenol N-acetylglucosamine transferase (362 aa).

Residues threonine 21–glycine 23, asparagine 129, arginine 170, serine 198, and glutamine 290 contribute to the UDP-N-acetyl-alpha-D-glucosamine site.

It belongs to the glycosyltransferase 28 family. MurG subfamily.

Its subcellular location is the cell inner membrane. It catalyses the reaction di-trans,octa-cis-undecaprenyl diphospho-N-acetyl-alpha-D-muramoyl-L-alanyl-D-glutamyl-meso-2,6-diaminopimeloyl-D-alanyl-D-alanine + UDP-N-acetyl-alpha-D-glucosamine = di-trans,octa-cis-undecaprenyl diphospho-[N-acetyl-alpha-D-glucosaminyl-(1-&gt;4)]-N-acetyl-alpha-D-muramoyl-L-alanyl-D-glutamyl-meso-2,6-diaminopimeloyl-D-alanyl-D-alanine + UDP + H(+). It functions in the pathway cell wall biogenesis; peptidoglycan biosynthesis. Cell wall formation. Catalyzes the transfer of a GlcNAc subunit on undecaprenyl-pyrophosphoryl-MurNAc-pentapeptide (lipid intermediate I) to form undecaprenyl-pyrophosphoryl-MurNAc-(pentapeptide)GlcNAc (lipid intermediate II). The protein is UDP-N-acetylglucosamine--N-acetylmuramyl-(pentapeptide) pyrophosphoryl-undecaprenol N-acetylglucosamine transferase of Synechococcus sp. (strain JA-3-3Ab) (Cyanobacteria bacterium Yellowstone A-Prime).